Here is a 105-residue protein sequence, read N- to C-terminus: Cuticle protein AMP4 (105 aa).

The interval aspartate 1–tyrosine 21 is disordered. The Chitin-binding type R&amp;R domain maps to aspartate 16–proline 81.

Arthrodial membrane.

This Homarus americanus (American lobster) protein is Cuticle protein AMP4.